A 380-amino-acid chain; its full sequence is Chaperone protein DnaJ (380 aa).

The J domain maps to 6 to 71 (DYYAILEVSR…QKRAAYDQYG (66 aa)). A CR-type zinc finger spans residues 136 to 215 (GVKKDVRVIT…CHGEGTVEKE (80 aa)). Residues cysteine 149, cysteine 152, cysteine 167, cysteine 170, cysteine 189, cysteine 192, cysteine 203, and cysteine 206 each contribute to the Zn(2+) site. CXXCXGXG motif repeat units lie at residues 149 to 156 (CEACHGTG), 167 to 174 (CPSCHGAG), 189 to 196 (CPTCHGAG), and 203 to 210 (CKVCHGEG).

It belongs to the DnaJ family. In terms of assembly, homodimer. Zn(2+) serves as cofactor.

It localises to the cytoplasm. Functionally, participates actively in the response to hyperosmotic and heat shock by preventing the aggregation of stress-denatured proteins and by disaggregating proteins, also in an autonomous, DnaK-independent fashion. Unfolded proteins bind initially to DnaJ; upon interaction with the DnaJ-bound protein, DnaK hydrolyzes its bound ATP, resulting in the formation of a stable complex. GrpE releases ADP from DnaK; ATP binding to DnaK triggers the release of the substrate protein, thus completing the reaction cycle. Several rounds of ATP-dependent interactions between DnaJ, DnaK and GrpE are required for fully efficient folding. Also involved, together with DnaK and GrpE, in the DNA replication of plasmids through activation of initiation proteins. The polypeptide is Chaperone protein DnaJ (Acetobacter pasteurianus (strain NBRC 105184 / IFO 3283-01)).